The chain runs to 381 residues: Pentatricopeptide repeat-containing protein 2, mitochondrial (381 aa).

One copy of the PPR repeat lies at 157 to 191 (DTTSFNITIDMLFNKQLYESGLEVVGEMKKQGVSL).

This sequence belongs to the PTCD2 family.

Its subcellular location is the mitochondrion. In terms of biological role, involved in mitochondrial RNA maturation and mitochondrial respiratory chain function. The sequence is that of Pentatricopeptide repeat-containing protein 2, mitochondrial (ptcd2) from Danio rerio (Zebrafish).